Consider the following 312-residue polypeptide: Aspartate carbamoyltransferase catalytic subunit (312 aa).

Arg58 and Thr59 together coordinate carbamoyl phosphate. Lys86 contacts L-aspartate. The carbamoyl phosphate site is built by Arg108, His136, and Gln139. Residues Arg169 and Arg223 each coordinate L-aspartate. Carbamoyl phosphate is bound by residues Gly264 and Pro265.

This sequence belongs to the aspartate/ornithine carbamoyltransferase superfamily. ATCase family. As to quaternary structure, heterododecamer (2C3:3R2) of six catalytic PyrB chains organized as two trimers (C3), and six regulatory PyrI chains organized as three dimers (R2).

It catalyses the reaction carbamoyl phosphate + L-aspartate = N-carbamoyl-L-aspartate + phosphate + H(+). It participates in pyrimidine metabolism; UMP biosynthesis via de novo pathway; (S)-dihydroorotate from bicarbonate: step 2/3. Its function is as follows. Catalyzes the condensation of carbamoyl phosphate and aspartate to form carbamoyl aspartate and inorganic phosphate, the committed step in the de novo pyrimidine nucleotide biosynthesis pathway. This chain is Aspartate carbamoyltransferase catalytic subunit, found in Endomicrobium trichonymphae.